A 342-amino-acid chain; its full sequence is Keratin-associated protein 29-1 (342 aa).

5 repeat units span residues 5 to 9 (CCPEN), 91 to 95 (CCASD), 239 to 243 (CCVPP), 309 to 313 (CCVTG), and 324 to 328 (CCPPT). The interval 5–328 (CCPENPTAVP…SSGPGCCPPT (324 aa)) is 5 X 5 AA repeats of C-C-X(3).

This sequence belongs to the KRTAP type 10 family.

The protein is Keratin-associated protein 29-1 (Krtap29-1) of Mus musculus (Mouse).